A 433-amino-acid chain; its full sequence is Serine--tRNA ligase (433 aa).

Position 235 to 237 (235 to 237 (TSE)) interacts with L-serine. 266–268 (RSE) provides a ligand contact to ATP. Residue Glu-289 coordinates L-serine. 353 to 356 (EISS) contributes to the ATP binding site. Ser-388 is an L-serine binding site.

This sequence belongs to the class-II aminoacyl-tRNA synthetase family. Type-1 seryl-tRNA synthetase subfamily. In terms of assembly, homodimer. The tRNA molecule binds across the dimer.

The protein resides in the cytoplasm. The enzyme catalyses tRNA(Ser) + L-serine + ATP = L-seryl-tRNA(Ser) + AMP + diphosphate + H(+). It carries out the reaction tRNA(Sec) + L-serine + ATP = L-seryl-tRNA(Sec) + AMP + diphosphate + H(+). Its pathway is aminoacyl-tRNA biosynthesis; selenocysteinyl-tRNA(Sec) biosynthesis; L-seryl-tRNA(Sec) from L-serine and tRNA(Sec): step 1/1. Its function is as follows. Catalyzes the attachment of serine to tRNA(Ser). Is also able to aminoacylate tRNA(Sec) with serine, to form the misacylated tRNA L-seryl-tRNA(Sec), which will be further converted into selenocysteinyl-tRNA(Sec). The chain is Serine--tRNA ligase from Burkholderia vietnamiensis (strain G4 / LMG 22486) (Burkholderia cepacia (strain R1808)).